Reading from the N-terminus, the 583-residue chain is Isocitrate dehydrogenase kinase/phosphatase (583 aa).

ATP-binding positions include 315–321 (APGIRGM) and lysine 336. The active site involves aspartate 371.

It belongs to the AceK family.

Its subcellular location is the cytoplasm. The catalysed reaction is L-seryl-[isocitrate dehydrogenase] + ATP = O-phospho-L-seryl-[isocitrate dehydrogenase] + ADP + H(+). Bifunctional enzyme which can phosphorylate or dephosphorylate isocitrate dehydrogenase (IDH) on a specific serine residue. This is a regulatory mechanism which enables bacteria to bypass the Krebs cycle via the glyoxylate shunt in response to the source of carbon. When bacteria are grown on glucose, IDH is fully active and unphosphorylated, but when grown on acetate or ethanol, the activity of IDH declines drastically concomitant with its phosphorylation. This Salmonella agona (strain SL483) protein is Isocitrate dehydrogenase kinase/phosphatase.